The sequence spans 329 residues: Acetyl-coenzyme A carboxylase carboxyl transferase subunit alpha (329 aa).

One can recognise a CoA carboxyltransferase C-terminal domain in the interval 40–294 (QLETLAARRR…KNALEKHLSE (255 aa)).

Belongs to the AccA family. In terms of assembly, acetyl-CoA carboxylase is a heterohexamer composed of biotin carboxyl carrier protein (AccB), biotin carboxylase (AccC) and two subunits each of ACCase subunit alpha (AccA) and ACCase subunit beta (AccD).

The protein resides in the cytoplasm. It catalyses the reaction N(6)-carboxybiotinyl-L-lysyl-[protein] + acetyl-CoA = N(6)-biotinyl-L-lysyl-[protein] + malonyl-CoA. Its pathway is lipid metabolism; malonyl-CoA biosynthesis; malonyl-CoA from acetyl-CoA: step 1/1. In terms of biological role, component of the acetyl coenzyme A carboxylase (ACC) complex. First, biotin carboxylase catalyzes the carboxylation of biotin on its carrier protein (BCCP) and then the CO(2) group is transferred by the carboxyltransferase to acetyl-CoA to form malonyl-CoA. The protein is Acetyl-coenzyme A carboxylase carboxyl transferase subunit alpha of Prochlorococcus marinus (strain NATL2A).